The chain runs to 395 residues: Tryptophan synthase beta chain (395 aa).

Lysine 86 is modified (N6-(pyridoxal phosphate)lysine).

It belongs to the TrpB family. As to quaternary structure, tetramer of two alpha and two beta chains. Requires pyridoxal 5'-phosphate as cofactor.

The catalysed reaction is (1S,2R)-1-C-(indol-3-yl)glycerol 3-phosphate + L-serine = D-glyceraldehyde 3-phosphate + L-tryptophan + H2O. It functions in the pathway amino-acid biosynthesis; L-tryptophan biosynthesis; L-tryptophan from chorismate: step 5/5. Functionally, the beta subunit is responsible for the synthesis of L-tryptophan from indole and L-serine. This chain is Tryptophan synthase beta chain, found in Pseudoalteromonas atlantica (strain T6c / ATCC BAA-1087).